Consider the following 363-residue polypeptide: UDP-N-acetylglucosamine--N-acetylmuramyl-(pentapeptide) pyrophosphoryl-undecaprenol N-acetylglucosamine transferase (363 aa).

UDP-N-acetyl-alpha-D-glucosamine-binding positions include 10–12 (TGG), Asn-124, Ser-195, Ile-250, and Gln-295.

It belongs to the glycosyltransferase 28 family. MurG subfamily.

The protein localises to the cell membrane. The enzyme catalyses di-trans,octa-cis-undecaprenyl diphospho-N-acetyl-alpha-D-muramoyl-L-alanyl-D-glutamyl-meso-2,6-diaminopimeloyl-D-alanyl-D-alanine + UDP-N-acetyl-alpha-D-glucosamine = di-trans,octa-cis-undecaprenyl diphospho-[N-acetyl-alpha-D-glucosaminyl-(1-&gt;4)]-N-acetyl-alpha-D-muramoyl-L-alanyl-D-glutamyl-meso-2,6-diaminopimeloyl-D-alanyl-D-alanine + UDP + H(+). It participates in cell wall biogenesis; peptidoglycan biosynthesis. Cell wall formation. Catalyzes the transfer of a GlcNAc subunit on undecaprenyl-pyrophosphoryl-MurNAc-pentapeptide (lipid intermediate I) to form undecaprenyl-pyrophosphoryl-MurNAc-(pentapeptide)GlcNAc (lipid intermediate II). The protein is UDP-N-acetylglucosamine--N-acetylmuramyl-(pentapeptide) pyrophosphoryl-undecaprenol N-acetylglucosamine transferase of Listeria monocytogenes serotype 4a (strain HCC23).